A 475-amino-acid chain; its full sequence is MRVMFAASEATPFSKSGGLGDVIGSLPFYLKKLGVDVSVILPKYQEIPQDLKMKMKWIKSMTVPVGWRNQFCGIEILSYKDIHFYFVDNQYYFNREGFYGHNDDGERFAFFSRSVLEILPHIDCKPDIIHCHDWQTAMISYLLKTQYQHHGFYKNIKTVFTIHNLKYQGVFPQEVLGDLFNGSQQHFNEGGVEYHGNVNYMKGGLNFSDYITTVSPTYAQEIQDPFFGEGLEGVLSRKKKQLQGVTNGIDDSVYNPQTDIHLFKNFSSENLRNKKDNKLGLQERLNLAVDAKIPMIGMVTRLVEQKGLDLVANQLEKLMEEEIQLVVLGTGDHQYEEIFRQAAIKYPERISTNLFFDEVLAQQIYGGSDFFLMPSLFEPCGLGQLIALRYGTVPIVRETGGLKDTIQYYDEVSKEGNGFTFTNYNAHDMFNTIKEAIRLYPDKRKFNKVVRNAMNTKVGWEESAKTYLKLYRSLG.

K15 serves as a coordination point for ADP-alpha-D-glucose.

The protein belongs to the glycosyltransferase 1 family. Bacterial/plant glycogen synthase subfamily.

It carries out the reaction [(1-&gt;4)-alpha-D-glucosyl](n) + ADP-alpha-D-glucose = [(1-&gt;4)-alpha-D-glucosyl](n+1) + ADP + H(+). Its pathway is glycan biosynthesis; glycogen biosynthesis. Its function is as follows. Synthesizes alpha-1,4-glucan chains using ADP-glucose. The polypeptide is Glycogen synthase (Alkaliphilus metalliredigens (strain QYMF)).